The chain runs to 92 residues: UPF0235 protein PYRAB05010 (92 aa).

It belongs to the UPF0235 family.

The polypeptide is UPF0235 protein PYRAB05010 (Pyrococcus abyssi (strain GE5 / Orsay)).